The sequence spans 403 residues: MKIRDAYTIVTCPGRNFVTLKIVTESGTHGIGDATLNGREMAVAAYLDEHVVPALIGRDAGRIEDTWQYLYRGAYWRRGPVTMTAIAAVDMALWDIKAKAAGMPLYQLLGGKSRERVMTYAHCTGQTIEDCLGEVARHVELGYRAVRVQSGVPGIETTYGVAKTPGERYEPADSSLPAEHVWSTEKYLNHAPKLFAAVRERFGDDLHVLHDVHHRLTPIEAARLGKAVEPYHLFWLEDCVPAENQESLRLIREHTTTPLAIGEVFNSIHDCRELIQNQWIDYIRMPLTHGGGITAMRRVADLASLYHVRTGFHGPTDLSPVCLGAAIHFDTWVPNFGIQEHMPHTDETDAVFPHDYRFEDGHFLAGESPGHGVDIDEELAAKYPYERASLPVNRLEDGTLWHW.

Substrate contacts are provided by N37 and H122. Y159 serves as the catalytic Proton donor/acceptor. D211 contacts Mg(2+). The active-site Proton donor/acceptor is the H213. Mg(2+) is bound by residues E237 and E263. 5 residues coordinate substrate: E263, R284, H313, D317, and E340.

The protein belongs to the mandelate racemase/muconate lactonizing enzyme family. GalD subfamily. Requires Mg(2+) as cofactor.

It catalyses the reaction D-mannonate = 2-dehydro-3-deoxy-D-gluconate + H2O. The catalysed reaction is D-gluconate = 2-dehydro-3-deoxy-D-gluconate + H2O. Has low dehydratase activity with D-mannonate and D-gluconate, suggesting that these are not physiological substrates and that it has no significant role in the in vivo degradation of these compounds. Has no detectable activity with a panel of 70 other acid sugars (in vitro). This is D-galactonate dehydratase family member ManD (manD) from Chromohalobacter salexigens (strain ATCC BAA-138 / DSM 3043 / CIP 106854 / NCIMB 13768 / 1H11).